Reading from the N-terminus, the 128-residue chain is Large ribosomal subunit protein bL17 (128 aa).

Belongs to the bacterial ribosomal protein bL17 family. In terms of assembly, part of the 50S ribosomal subunit. Contacts protein L32.

The polypeptide is Large ribosomal subunit protein bL17 (Streptococcus equi subsp. equi (strain 4047)).